A 523-amino-acid polypeptide reads, in one-letter code: Glycerate kinase (523 aa).

Ser-60 carries the phosphoserine modification. N6-acetyllysine is present on Lys-200.

Belongs to the glycerate kinase type-2 family.

Its subcellular location is the cytoplasm. The enzyme catalyses (R)-glycerate + ATP = (2R)-3-phosphoglycerate + ADP + H(+). This Bos taurus (Bovine) protein is Glycerate kinase (GLYCTK).